The sequence spans 544 residues: Chaperonin GroEL 1 (544 aa).

ATP contacts are provided by residues 30 to 33 (TLGP), Lys51, 87 to 91 (DGTTT), Gly415, and Asp494.

This sequence belongs to the chaperonin (HSP60) family. As to quaternary structure, forms a cylinder of 14 subunits composed of two heptameric rings stacked back-to-back. Interacts with the co-chaperonin GroES.

It localises to the cytoplasm. The catalysed reaction is ATP + H2O + a folded polypeptide = ADP + phosphate + an unfolded polypeptide.. Together with its co-chaperonin GroES, plays an essential role in assisting protein folding. The GroEL-GroES system forms a nano-cage that allows encapsulation of the non-native substrate proteins and provides a physical environment optimized to promote and accelerate protein folding. The polypeptide is Chaperonin GroEL 1 (Syntrophus aciditrophicus (strain SB)).